The primary structure comprises 1487 residues: Secretory phospholipase A2 receptor (1487 aa).

Positions 1–26 (MVQWLAMLQLLWLQQLLLLGIHQGIA) are cleaved as a signal peptide. At 27 to 1396 (QDLTHIQEPS…AQPEKGLSHS (1370 aa)) the chain is on the extracellular side. Positions 42 to 165 (KGIFIIQSES…SSGGDICEHP (124 aa)) constitute a Ricin B-type lectin domain. Cystine bridges form between Cys-55–Cys-68, Cys-93–Cys-110, Cys-181–Cys-207, and Cys-195–Cys-222. Asn-97 carries N-linked (GlcNAc...) asparagine glycosylation. In terms of domain architecture, Fibronectin type-II spans 176-224 (AHGMPCVFPFQFKGHWHHDCIREGQKEHLLWCATTSRYEEDEKWGFCPD). N-linked (GlcNAc...) asparagine glycosylation occurs at Asn-239. 6 C-type lectin domains span residues 241–357 (SSRI…YICK), 387–504 (FNRK…YICK), 524–643 (HGRF…MSLC), 673–797 (GLAS…WICR), 819–938 (YQNA…SICK), and 964–1095 (FNYK…GFVC). Disulfide bonds link Cys-263–Cys-356, Cys-333–Cys-348, Cys-408–Cys-503, Cys-480–Cys-495, Cys-617–Cys-634, Cys-699–Cys-796, Cys-774–Cys-788, Cys-840–Cys-937, Cys-914–Cys-929, and Cys-1066–Cys-1086. Residue Asn-928 is glycosylated (N-linked (GlcNAc...) asparagine). N-linked (GlcNAc...) asparagine glycosylation is found at Asn-1107, Asn-1122, and Asn-1131. C-type lectin domains follow at residues 1120–1231 (YGNR…GAIC) and 1256–1377 (FKGN…FICK). 3 cysteine pairs are disulfide-bonded: Cys-1208/Cys-1222, Cys-1279/Cys-1376, and Cys-1353/Cys-1368. Residues 1397 to 1417 (IVPVTVTLTLIIALGIFMLCF) traverse the membrane as a helical segment. Residues 1418-1487 (WIYKQKSDIF…HKGRPICISP (70 aa)) lie on the Cytoplasmic side of the membrane. An Endocytosis signal motif is present at residues 1435-1441 (GSYYPTL). A compositionally biased stretch (basic and acidic residues) spans 1463–1475 (DEEVRDAPATESK). The tract at residues 1463–1487 (DEEVRDAPATESKRGHKGRPICISP) is disordered.

As to quaternary structure, interacts with sPLA2-IB/PLA2G1B; this interaction mediates intracellular signaling as well as clearance of extracellular sPLA2-IB/PLA2G1B via endocytotic pathway. Interacts with sPLA2-X/PLA2G10; this interaction mediates sPLA2-X/PLA2G10 clearance and inactivation. Post-translationally, the secretory phospholipase A2 receptor form may be produced by the action of metalloproteinases. It contains all extracellular domains and only lacks transmembrane and cytosolic regions. It is however unclear whether this form is produced by proteolytic cleavage as suggested by some experiments reported by PubMed:11830583, or by alternative splicing. Widely expressed. Present in type II alveolar epithelial cells and a subset of splenic lymphocytes. Present at the surface of polymorphonuclear neutrophils (at protein level).

The protein localises to the cell membrane. The protein resides in the secreted. In terms of biological role, receptor for secretory phospholipase A2 (sPLA2). Acts as a receptor for phospholipases sPLA2-IB/PLA2G1B, sPLA2-X/PLA2G10 and, with lower affinity, sPLA2-IIA/PLA2G2A. Also able to bind to snake PA2-like toxins. Although its precise function remains unclear, binding of sPLA2 to its receptor participates in both positive and negative regulation of sPLA2 functions as well as clearance of sPLA2. Binding of sPLA2-IB/PLA2G1B induces various effects depending on the cell type, such as activation of the mitogen-activated protein kinase (MAPK) cascade to induce cell proliferation, the production of lipid mediators, selective release of arachidonic acid in bone marrow-derived mast cells. In neutrophils, binding of sPLA2-IB/PLA2G1B can activate p38 MAPK to stimulate elastase release and cell adhesion. May be involved in responses in pro-inflammatory cytokine productions during endotoxic shock. Also has endocytic properties and rapidly internalizes sPLA2 ligands, which is particularly important for the clearance of extracellular sPLA2s to protect their potent enzymatic activities. The soluble secretory phospholipase A2 receptor form is circulating and acts as a negative regulator of sPLA2 functions by blocking the biological functions of sPLA2-IB/PLA2G1B and sPLA2-X/PLA2G10. In podocytes, binding of sPLA2-IB/PLA2G1B can regulate podocyte survival and glomerular homeostasis. The sequence is that of Secretory phospholipase A2 receptor (Pla2r1) from Mus musculus (Mouse).